We begin with the raw amino-acid sequence, 32 residues long: U3-theraphotoxin-Hhn1r (32 aa).

Intrachain disulfides connect Cys-2–Cys-15, Cys-9–Cys-20, and Cys-14–Cys-27.

The protein belongs to the neurotoxin 10 (Hwtx-1) family. 16 (Hntx-8) subfamily. Expressed by the venom gland.

The protein resides in the secreted. Its function is as follows. Ion channel inhibitor. The protein is U3-theraphotoxin-Hhn1r of Cyriopagopus hainanus (Chinese bird spider).